Reading from the N-terminus, the 316-residue chain is SHC-transforming protein homolog 1 (316 aa).

The PID domain maps to 16 to 158 (GVSLSATYLG…LIDVLTTAIN (143 aa)). In terms of domain architecture, SH2 spans 211–307 (WYHGNLSRED…ETSLNLIRPV (97 aa)). Positions 292-316 (SEGRDRETSLNLIRPVPCPGSDDIE) are disordered.

As to quaternary structure, interacts (via PID domain) with daf-2 (via cytoplasmic domain). Interacts with mek-1; the interaction is independent of mek-1 catalytic activity and is constitutive. Interacts (via N-terminus) with mlk-1 (via NPQY motif when phosphorylated on tyrosine residue). Does not interact with jkk-1 or sek-1. Interacts (via SH2 domain) with svh-2. Interacts with svh-4. As to expression, expressed in hypodermis, intestine, head and tail neurons, pharynx, gonads, vulva and body muscles.

It localises to the cytoplasm. It is found in the nucleus. Its subcellular location is the cell membrane. Scaffold protein which plays an important role in the activation of the JNK pathway composed of mlk-1, mek-1 and kgb-1; by bringing together mek-1 and mlk-1, promotes mlk-1-mediated phosphorylation and activation of mek-1 which in turn phosphorylates kgb-1. In addition, negatively modulates the activation of the insulin/IGF-1-like signaling (IIS) probably by inhibiting the insulin receptor daf-2. Positively regulates the activity of the transcription factor daf-16/FOXO by both inhibiting IIS and activating the JNK pathway. Plays a role in maintaining gonadal basement membrane integrity through activation of the JNK pathway components mek-1 and jnk-1. Involved in the response to several environmental stresses including heavy metal ions (Cu(2+) and Cd(2+)), heat, oxidative and protein misfolding (ER) stresses. Plays a role in gonad and germline development following the L1 diapause. Plays a role in life span and egg laying. Plays a role in axon regeneration after injury. This Caenorhabditis elegans protein is SHC-transforming protein homolog 1.